The chain runs to 291 residues: Methylsterol monooxygenase 1-3 (291 aa).

The next 3 helical transmembrane spans lie at 41-61, 92-112, and 114-134; these read TILVLFLVFSLAPFPLVIVEW, FLLVVGTLQIVSYPSIQMVGI, and SGLPLPSLMEIVAQLVVYFLI. Residues 128 to 263 enclose the Fatty acid hydroxylase domain; that stretch reads LVVYFLIEDY…FTYCDYIYGT (136 aa). Positions 143-147 match the Histidine box-1 motif; that stretch reads HRWMH. The short motif at 156–160 is the Histidine box-2 element; the sequence is HRIHH. A helical membrane pass occupies residues 178–198; that stretch reads ILILGIPTFLGPAIAPGHIMT. The short motif at 235-241 is the Histidine box-3 element; sequence YHDYHHY.

This sequence belongs to the sterol desaturase family. Interacts with ACBP1. Fe cation is required as a cofactor. Expressed at low levels in leaves, roots, siliques and flowers.

Its subcellular location is the endoplasmic reticulum membrane. It carries out the reaction 4,4-dimethyl-5alpha-cholest-7-en-3beta-ol + 6 Fe(II)-[cytochrome b5] + 3 O2 + 5 H(+) = 4alpha-carboxy-4beta-methyl-5alpha-cholest-7-ene-3beta-ol + 6 Fe(III)-[cytochrome b5] + 4 H2O. It catalyses the reaction 24-methylidenelophenol + 6 Fe(II)-[cytochrome b5] + 3 O2 + 5 H(+) = 4alpha-carboxy-ergosta-7,24(24(1))-dien-3beta-ol + 6 Fe(III)-[cytochrome b5] + 4 H2O. In terms of biological role, non-heme iron oxygenase involved in sterols biosynthesis by catalyzing the removal of the first methyl group at the C-4 position. 4,4-dimethyl-9-beta,19-cyclopropylsterols such as 24-methylenecycloartanol are the preferred substrates. The sequence is that of Methylsterol monooxygenase 1-3 from Arabidopsis thaliana (Mouse-ear cress).